Consider the following 888-residue polypeptide: DNA mismatch repair protein MutS (888 aa).

641 to 648 contributes to the ATP binding site; it reads GPNMAGKS.

The protein belongs to the DNA mismatch repair MutS family.

Functionally, this protein is involved in the repair of mismatches in DNA. It is possible that it carries out the mismatch recognition step. This protein has a weak ATPase activity. The protein is DNA mismatch repair protein MutS of Rickettsia bellii (strain RML369-C).